A 569-amino-acid chain; its full sequence is Peroxynitrite isomerase THAP4 (569 aa).

The THAP-type zinc-finger motif lies at 1-85; sequence MVICCAAVNC…LKPTAVPSIF (85 aa). The segment at 83 to 219 is disordered; sequence SIFHLSEKKR…GISMDDFTPP (137 aa). A compositionally biased stretch (polar residues) spans 121-130; it reads IGSSLSSSDN. Position 159 is a phosphoserine (serine 159). Positions 196–210 are enriched in low complexity; sequence ASSSAADAGGADKSG. The short motif at 230-233 is the HCFC1-binding motif (HBM) element; it reads LHSY. Serine 234 is modified (phosphoserine). The disordered stretch occupies residues 235–312; that stretch reads FSSKHTRERP…EAVQSEHSDA (78 aa). Residues 242–262 show a composition bias toward basic and acidic residues; sequence ERPSVPREPMDRKRLKRDIEP. A compositionally biased stretch (polar residues) spans 265–279; sequence SGNSVAQSPPSSSLT. Positions 280–289 are enriched in low complexity; that stretch reads ATPQKASQSP. Residues 407 to 569 are nitrobindin; sequence PPKLNPVVEP…LHITYKKVTP (163 aa). Heme b contacts are provided by threonine 436 and histidine 559.

The protein in the C-terminal section; belongs to the nitrobindin family. Homodimer. The cofactor is heme b.

Its subcellular location is the cytoplasm. It is found in the nucleus. The enzyme catalyses peroxynitrite = nitrate. It participates in nitrogen metabolism. Its function is as follows. Heme-binding protein able to scavenge peroxynitrite and to protect free L-tyrosine against peroxynitrite-mediated nitration, by acting as a peroxynitrite isomerase that converts peroxynitrite to nitrate. Therefore, this protein likely plays a role in peroxynitrite sensing and in the detoxification of reactive nitrogen and oxygen species (RNS and ROS, respectively). Is able to bind nitric oxide (NO) in vitro, but may act as a sensor of peroxynitrite levels in vivo, possibly modulating the transcriptional activity residing in the N-terminal region. The protein is Peroxynitrite isomerase THAP4 of Rattus norvegicus (Rat).